The following is a 481-amino-acid chain: Tagaturonate/fructuronate epimerase (481 aa).

The Proton acceptor role is filled by D161. An a divalent metal cation-binding site is contributed by H162. Residue E266 is the Proton donor of the active site. A divalent metal cation contacts are provided by K308 and H341.

Belongs to the UxaE family. A divalent metal cation serves as cofactor.

It carries out the reaction keto-D-tagaturonate = keto-D-fructuronate. In terms of biological role, catalyzes the epimerization of D-tagaturonate (D-TagA) to D-fructuronate (D-FruA). The chain is Tagaturonate/fructuronate epimerase from Thermotoga maritima (strain ATCC 43589 / DSM 3109 / JCM 10099 / NBRC 100826 / MSB8).